Reading from the N-terminus, the 878-residue chain is Aminopeptidase M1-C (878 aa).

Residues 102-209 (LGEGVLAMDF…MSTYLVAIVV (108 aa)) form a required for membrane association region. Substrate-binding positions include glutamate 142 and 275-279 (GAMEN). Histidine 311 provides a ligand contact to Zn(2+). The active-site Proton acceptor is glutamate 312. Histidine 315 and glutamate 334 together coordinate Zn(2+). A Dileucine internalization motif motif is present at residues 726–727 (LL).

This sequence belongs to the peptidase M1 family. Homodimer. The cofactor is Zn(2+).

The protein localises to the membrane. The protein resides in the microsome membrane. Its subcellular location is the cytoplasm. The catalysed reaction is Release of an N-terminal amino acid, Xaa-|-Yaa- from a peptide, amide or arylamide. Xaa is preferably Ala, but may be most amino acids including Pro (slow action). When a terminal hydrophobic residue is followed by a prolyl residue, the two may be released as an intact Xaa-Pro dipeptide.. This Oryza sativa subsp. japonica (Rice) protein is Aminopeptidase M1-C.